A 243-amino-acid chain; its full sequence is Toxin CcTX-1 (243 aa).

Residues 1-25 show a composition bias toward basic and acidic residues; it reads SSPEKKNDMSKPGRMRFDNKKEPRS. Positions 1-48 are disordered; sequence SSPEKKNDMSKPGRMRFDNKKEPRSSAKNSGNGYGCVDVNAGREPLTG.

Contains disulfide bonds. Nematocytes.

It localises to the secreted. The protein resides in the nematocyst. Its subcellular location is the target cell membrane. In terms of biological role, has potent hemolytic activity. Is lethal to crayfish. Causes cutaneous inflammation in humans. May act as a pore-forming toxin, disrupting normal transmembrane ion concentration gradients in susceptible cells. The protein is Toxin CcTX-1 of Cyanea capillata (Lion's mane jellyfish).